Consider the following 557-residue polypeptide: Elongator complex protein 3 (557 aa).

Residues 91-381 enclose the Radical SAM core domain; the sequence is RTASGIAVVA…YRVQRDIPMP (291 aa). [4Fe-4S] cluster is bound by residues Cys-108, Cys-118, and Cys-121. Lys-173 serves as a coordination point for acetyl-CoA. The N-acetyltransferase domain occupies 405 to 557; sequence TTCRDVRTRE…LDGPYMSKRI (153 aa). Lys-453 participates in a covalent cross-link: Glycyl lysine isopeptide (Lys-Gly) (interchain with G-Cter in ubiquitin). Residues 485–488, 508–510, and Tyr-541 each bind acetyl-CoA; these read ELHV and FGT.

The protein belongs to the ELP3 family. Component of the elongator complex which consists of ELP1/IKI3, ELP2, ELP3, ELP4, ELP5/IKI1 and ELP6. The elongator complex is composed of two copies of the Elp123 subcomplex (composed of ELP1/IKI3, ELP2 and ELP3) and two copies of the Elp456 subcomplex (composed of ELP4, ELP5/IKI1 and ELP6). The Elp123 subcomplex forms a two-lobed scaffold, which binds the Elp456 subcomplex asymmetrically. In each lobe, ELP2 is tightly sandwiched between ELP1/IKI3 and ELP3. The Elp123 subcomplex binds tRNA through ELP1/IKI3 and ELP3 and can bind 2 tRNAs simultaneously. tRNA-binding induces conformational rearrangements which precisely position the targeted anticodon base in the active site. ELP3 interacts with KTI11/DPH3. ELP3 interacts with KTI12. The Elp456 subcomplex binds tRNA and has ATPase activity. Requires [4Fe-4S] cluster as cofactor.

The protein resides in the cytoplasm. It is found in the nucleus. It carries out the reaction uridine(34) in tRNA + acetyl-CoA + S-adenosyl-L-methionine + H2O = 5-(carboxymethyl)uridine(34) in tRNA + 5'-deoxyadenosine + L-methionine + CoA + 2 H(+). It functions in the pathway tRNA modification; 5-methoxycarbonylmethyl-2-thiouridine-tRNA biosynthesis. Its function is as follows. Catalytic tRNA acetyltransferase subunit of the elongator complex which is required for multiple tRNA modifications, including mcm5U (5-methoxycarbonylmethyl uridine), mcm5s2U (5-methoxycarbonylmethyl-2-thiouridine), and ncm5U (5-carbamoylmethyl uridine). In the elongator complex, acts as a tRNA uridine(34) acetyltransferase, which mediates formation of carboxymethyluridine in the wobble base at position 34 in tRNAs. The complex functions as a gamma-toxin target (TOT); disruption of the complex confers resistance to Kluyveromyces lactis toxin zymocin (pGKL1 killer toxin). May also be involved in sensitivity to Pichia inositovora toxin. Independently, ELP3 may be involved in polarized exocytosis. The sequence is that of Elongator complex protein 3 from Saccharomyces cerevisiae (strain ATCC 204508 / S288c) (Baker's yeast).